Consider the following 606-residue polypeptide: NADH-ubiquinone oxidoreductase chain 5 (606 aa).

Helical transmembrane passes span 4 to 24 (FSSLSLVTLLLLTMPIMMMSL), 43 to 63 (AFITSMIPTMMFIHSGQELII), 87 to 107 (MMFTPVALFVTWSIMEFSMWY), 117 to 137 (FFKYLLLFLITMLILVTANNL), 140 to 160 (LFIGWEGVGIMSFLLIGWWYG), 171 to 191 (AVLYNRIGDIGFILAMAWFLT), 213 to 233 (LIGLALAATGKSAQFGLHPWL), 241 to 261 (TPVSALLHSSTMVVAGIFLLI), 272 to 292 (FIQSITLCLGAITTLFTAMCA), 310 to 330 (LGLMMVTIGINQPYLAFLHIC), 366 to 386 (MPFTTTALIVGSLALTGMPFL), 413 to 433 (LIATSFTAIYSTRIIFFALLG), 457 to 477 (LLIGSLFAGYIISNNIPPTTI), 482 to 502 (MPYYLKTTALIVTILGFILAL), and 582 to 602 (GLIKLYFLSFLITILISMMLF).

As to quaternary structure, core subunit of respiratory chain NADH dehydrogenase (Complex I) which is composed of 45 different subunits.

Its subcellular location is the mitochondrion inner membrane. The catalysed reaction is a ubiquinone + NADH + 5 H(+)(in) = a ubiquinol + NAD(+) + 4 H(+)(out). Core subunit of the mitochondrial membrane respiratory chain NADH dehydrogenase (Complex I) which catalyzes electron transfer from NADH through the respiratory chain, using ubiquinone as an electron acceptor. Essential for the catalytic activity and assembly of complex I. The sequence is that of NADH-ubiquinone oxidoreductase chain 5 (MT-ND5) from Bos indicus (Zebu).